The primary structure comprises 450 residues: uncharacterized protein (450 aa).

Over residues 387–416 (ELDEKNNNKEENKNQDLHEPKESSSEDLLK) the composition is skewed to basic and acidic residues. Residues 387-439 (ELDEKNNNKEENKNQDLHEPKESSSEDLLKRLNNLKINTNEGPVQDNENHDNE) are disordered.

This is an uncharacterized protein from Saccharomyces cerevisiae (strain ATCC 204508 / S288c) (Baker's yeast).